A 671-amino-acid chain; its full sequence is DNA ligase (671 aa).

NAD(+) contacts are provided by residues 32 to 36 (DAEYD), 81 to 82 (SL), and Glu-113. Lys-115 functions as the N6-AMP-lysine intermediate in the catalytic mechanism. Positions 136, 173, 290, and 314 each coordinate NAD(+). Positions 408, 411, 426, and 432 each coordinate Zn(2+). A BRCT domain is found at 593–671 (EIDSPFAGKT…EAEMIRLLGA (79 aa)).

This sequence belongs to the NAD-dependent DNA ligase family. LigA subfamily. The cofactor is Mg(2+). Mn(2+) is required as a cofactor.

The enzyme catalyses NAD(+) + (deoxyribonucleotide)n-3'-hydroxyl + 5'-phospho-(deoxyribonucleotide)m = (deoxyribonucleotide)n+m + AMP + beta-nicotinamide D-nucleotide.. DNA ligase that catalyzes the formation of phosphodiester linkages between 5'-phosphoryl and 3'-hydroxyl groups in double-stranded DNA using NAD as a coenzyme and as the energy source for the reaction. It is essential for DNA replication and repair of damaged DNA. The polypeptide is DNA ligase (Salmonella heidelberg (strain SL476)).